Here is a 203-residue protein sequence, read N- to C-terminus: Small ribosomal subunit protein uS5 (203 aa).

Residues 1-25 (MPGRTRRDGGSESGGKDRRDRRDGG) are compositionally biased toward basic and acidic residues. The interval 1–36 (MPGRTRRDGGSESGGKDRRDRRDGGRGGAAQEKTPQ) is disordered. In terms of domain architecture, S5 DRBM spans 36 to 99 (QFERVVTINR…EEAKKNFFRV (64 aa)).

It belongs to the universal ribosomal protein uS5 family. Part of the 30S ribosomal subunit. Contacts proteins S4 and S8.

Its function is as follows. With S4 and S12 plays an important role in translational accuracy. Located at the back of the 30S subunit body where it stabilizes the conformation of the head with respect to the body. The chain is Small ribosomal subunit protein uS5 from Saccharopolyspora erythraea (strain ATCC 11635 / DSM 40517 / JCM 4748 / NBRC 13426 / NCIMB 8594 / NRRL 2338).